A 1769-amino-acid chain; its full sequence is U3 small nucleolar RNA-associated protein 10 (1769 aa).

At serine 2 the chain carries N-acetylserine. Residues 1729-1767 (LVPVIAELLEDDDEEIEREVRTGLVKVVENVLGEPFDRY) form an HEAT repeat.

The protein belongs to the HEATR1/UTP10 family. In terms of assembly, interacts with snoRNA U3. Interacts with MPP10. Component of the ribosomal small subunit (SSU) processome composed of at least 40 protein subunits and snoRNA U3. In the absence of snoRNA3, forms a complex with other t-UTPs. This complex can associate with pre-18S ribosomal RNAs.

Its subcellular location is the nucleus. It localises to the nucleolus. The protein localises to the mitochondrion. Functionally, involved in nucleolar processing of pre-18S ribosomal RNA. Required for optimal pre-ribosomal RNA transcription by RNA polymerase I together with a subset of U3 proteins required for transcription (t-UTPs). Involved in ribosome biosynthesis. The polypeptide is U3 small nucleolar RNA-associated protein 10 (UTP10) (Saccharomyces cerevisiae (strain ATCC 204508 / S288c) (Baker's yeast)).